A 302-amino-acid chain; its full sequence is Sulfate adenylyltransferase subunit 2 (302 aa).

This sequence belongs to the PAPS reductase family. CysD subfamily. As to quaternary structure, heterodimer composed of CysD, the smaller subunit, and CysN.

It carries out the reaction sulfate + ATP + H(+) = adenosine 5'-phosphosulfate + diphosphate. It participates in sulfur metabolism; hydrogen sulfide biosynthesis; sulfite from sulfate: step 1/3. With CysN forms the ATP sulfurylase (ATPS) that catalyzes the adenylation of sulfate producing adenosine 5'-phosphosulfate (APS) and diphosphate, the first enzymatic step in sulfur assimilation pathway. APS synthesis involves the formation of a high-energy phosphoric-sulfuric acid anhydride bond driven by GTP hydrolysis by CysN coupled to ATP hydrolysis by CysD. This is Sulfate adenylyltransferase subunit 2 from Salmonella agona (strain SL483).